The primary structure comprises 335 residues: uncharacterized protein (335 aa).

28–35 (GPINSGKT) lines the ATP pocket.

It belongs to the archaeal ATPase family.

This is an uncharacterized protein from Pyrococcus abyssi (strain GE5 / Orsay).